A 367-amino-acid chain; its full sequence is Heme A synthase (367 aa).

5 helical membrane-spanning segments follow: residues Ala-25 to Gly-45, Leu-111 to Gly-131, Trp-139 to Val-159, Leu-174 to Gly-194, and Gly-210 to Ala-230. His-274 is a heme binding site. Helical transmembrane passes span Ile-276 to Ala-296, Ala-305 to Met-325, and Val-327 to Val-347. Residue His-335 coordinates heme.

It belongs to the COX15/CtaA family. Type 2 subfamily. As to quaternary structure, interacts with CtaB. Heme b is required as a cofactor.

The protein localises to the cell membrane. It carries out the reaction Fe(II)-heme o + 2 A + H2O = Fe(II)-heme a + 2 AH2. Its pathway is porphyrin-containing compound metabolism; heme A biosynthesis; heme A from heme O: step 1/1. Catalyzes the conversion of heme O to heme A by two successive hydroxylations of the methyl group at C8. The first hydroxylation forms heme I, the second hydroxylation results in an unstable dihydroxymethyl group, which spontaneously dehydrates, resulting in the formyl group of heme A. In Rhizobium etli (strain CIAT 652), this protein is Heme A synthase.